Reading from the N-terminus, the 583-residue chain is Proline--tRNA ligase (583 aa).

Belongs to the class-II aminoacyl-tRNA synthetase family. ProS type 1 subfamily. Homodimer.

Its subcellular location is the cytoplasm. It catalyses the reaction tRNA(Pro) + L-proline + ATP = L-prolyl-tRNA(Pro) + AMP + diphosphate. Catalyzes the attachment of proline to tRNA(Pro) in a two-step reaction: proline is first activated by ATP to form Pro-AMP and then transferred to the acceptor end of tRNA(Pro). As ProRS can inadvertently accommodate and process non-cognate amino acids such as alanine and cysteine, to avoid such errors it has two additional distinct editing activities against alanine. One activity is designated as 'pretransfer' editing and involves the tRNA(Pro)-independent hydrolysis of activated Ala-AMP. The other activity is designated 'posttransfer' editing and involves deacylation of mischarged Ala-tRNA(Pro). The misacylated Cys-tRNA(Pro) is not edited by ProRS. The chain is Proline--tRNA ligase from Aromatoleum aromaticum (strain DSM 19018 / LMG 30748 / EbN1) (Azoarcus sp. (strain EbN1)).